A 449-amino-acid chain; its full sequence is Glutamate--tRNA ligase 2 (449 aa).

The 'HIGH' region signature appears at 17–27 (PSPTGFLHVGN). The 'KMSKS' region motif lies at 248-252 (ALSKR). Position 251 (K251) interacts with ATP.

It belongs to the class-I aminoacyl-tRNA synthetase family. Glutamate--tRNA ligase type 1 subfamily. Monomer.

The protein localises to the cytoplasm. It carries out the reaction tRNA(Glu) + L-glutamate + ATP = L-glutamyl-tRNA(Glu) + AMP + diphosphate. Functionally, catalyzes the attachment of glutamate to tRNA(Glu) in a two-step reaction: glutamate is first activated by ATP to form Glu-AMP and then transferred to the acceptor end of tRNA(Glu). The chain is Glutamate--tRNA ligase 2 from Jannaschia sp. (strain CCS1).